We begin with the raw amino-acid sequence, 264 residues long: NAD kinase (264 aa).

The active-site Proton acceptor is the D45. NAD(+) contacts are provided by residues 45 to 46, 121 to 122, R147, D149, A184, and Q221; these read DG and NE.

It belongs to the NAD kinase family. It depends on a divalent metal cation as a cofactor.

It localises to the cytoplasm. The enzyme catalyses NAD(+) + ATP = ADP + NADP(+) + H(+). Functionally, involved in the regulation of the intracellular balance of NAD and NADP, and is a key enzyme in the biosynthesis of NADP. Catalyzes specifically the phosphorylation on 2'-hydroxyl of the adenosine moiety of NAD to yield NADP. This is NAD kinase from Leuconostoc mesenteroides subsp. mesenteroides (strain ATCC 8293 / DSM 20343 / BCRC 11652 / CCM 1803 / JCM 6124 / NCDO 523 / NBRC 100496 / NCIMB 8023 / NCTC 12954 / NRRL B-1118 / 37Y).